Consider the following 312-residue polypeptide: Homoserine O-acetyltransferase (312 aa).

Cys142 acts as the Acyl-thioester intermediate in catalysis. Lys163 and Ser192 together coordinate substrate. His235 (proton acceptor) is an active-site residue. Glu237 is an active-site residue. Arg249 is a binding site for substrate.

This sequence belongs to the MetA family.

Its subcellular location is the cytoplasm. The catalysed reaction is L-homoserine + acetyl-CoA = O-acetyl-L-homoserine + CoA. Its pathway is amino-acid biosynthesis; L-methionine biosynthesis via de novo pathway; O-acetyl-L-homoserine from L-homoserine: step 1/1. In terms of biological role, transfers an acetyl group from acetyl-CoA to L-homoserine, forming acetyl-L-homoserine. The chain is Homoserine O-acetyltransferase from Ruegeria sp. (strain TM1040) (Silicibacter sp.).